The sequence spans 102 residues: A-type ATP synthase subunit F (102 aa).

This sequence belongs to the V-ATPase F subunit family. Has multiple subunits with at least A(3), B(3), C, D, E, F, H, I and proteolipid K(x).

Its subcellular location is the cell membrane. Component of the A-type ATP synthase that produces ATP from ADP in the presence of a proton gradient across the membrane. In Thermococcus kodakarensis (strain ATCC BAA-918 / JCM 12380 / KOD1) (Pyrococcus kodakaraensis (strain KOD1)), this protein is A-type ATP synthase subunit F.